The chain runs to 101 residues: Guanyl-specific ribonuclease Po1 (101 aa).

Pyrrolidone carboxylic acid is present on Gln-1. Cystine bridges form between Cys-7–Cys-84, Cys-9–Cys-99, and Cys-48–Cys-82. The active site involves His-36. The Proton acceptor role is filled by Glu-54. Residue His-87 is the Proton donor of the active site.

It belongs to the ribonuclease N1/T1 family.

It carries out the reaction [RNA] containing guanosine + H2O = an [RNA fragment]-3'-guanosine-3'-phosphate + a 5'-hydroxy-ribonucleotide-3'-[RNA fragment].. Inhibited by divalent cations. Inhibition decreases in the order zinc, lead, cadmium, nickel, mercury. This is Guanyl-specific ribonuclease Po1 from Pleurotus ostreatus (Oyster mushroom).